Here is an 842-residue protein sequence, read N- to C-terminus: Pentatricopeptide repeat-containing protein At3g23020 (842 aa).

Positions 40-61 (YVPGTHESDKGPQRSTRNGDRG) are disordered. Positions 45-59 (HESDKGPQRSTRNGD) are enriched in basic and acidic residues. 18 PPR repeats span residues 186–220 (NVIHYNIMLRILGKACKWRYVQSLWDEMIRKGIKP), 221–255 (INSTYGTLIDVYSKGGLKVHALCWLGKMSKIGMQP), 256–290 (DEVTTGIVLQMYKKAREFQKAEEFFKKWSCDENKA), 297–331 (SSYTYNTMIDTYGKSGQIKEASETFKRMLEEGIVP), 332–362 (TTVTFNTMIHIYGNNGQLGEVTSLMKTMKLH), 366–400 (DTRTYNILISLHTKNNDIERAGAYFKEMKDDGLKP), 401–435 (DPVSYRTLLYAFSIRHMVEEAEGLIAEMDDDNVEI), 436–470 (DEYTQSALTRMYVEAEMLEKSWSWFKRFHVAGNMS), 474–500 (YSANIDAYGERGYLSEAERVFICCQEV), 504–538 (TVIEYNVMIKAYGISKSCEKACELFESMMSYGVTP), 539–573 (DKCTYNTLVQILASADMPHKGRCYLEKMRETGYVS), 574–608 (DCIPYCAVISSFVKLGQLNMAEEVYKEMVEYNIEP), 609–643 (DVVVYGVLINAFADTGNVQQAMSYVEAMKEAGIPG), 644–674 (NSVIYNSLIKLYTKVGYLDEAEAIYRKLLQS), 682–712 (DVYTSNCMINLYSERSMVRKAEAIFDSMKQR), 716–750 (NEFTFAMMLCMYKKNGRFEEATQIAKQMREMKILT), 751–785 (DPLSYNSVLGLFALDGRFKEAVETFKEMVSSGIQP), and 786–820 (DDSTFKSLGTILMKLGMSKKAVRKIEEIRKKEIKR).

Belongs to the PPR family. P subfamily.

The polypeptide is Pentatricopeptide repeat-containing protein At3g23020 (Arabidopsis thaliana (Mouse-ear cress)).